The primary structure comprises 226 residues: Probable functional amyloid protease FapD (226 aa).

A signal peptide spans 1–18 (MRRATLCLLLLLAGPSWA). The region spanning 50 to 180 (QKTDFSCGAA…AGWNGIVFAV (131 aa)) is the Peptidase C39 domain. The active site involves C56.

This sequence belongs to the FapD family.

It is found in the periplasm. In terms of biological role, probable cysteine protease that is involved in processing fibril precursors. Upon overexpression of the endogenous six-gene locus (fapA-fapF) in situ, cells form large clumps during liquid growth, make large amounts of biofilm and produce amyloid fibrils. Expression of the 6 gene operon in E.coli strain BL21(DE3) induces flocculation and biofilm formation with copious extracellular fibrils. The polypeptide is Probable functional amyloid protease FapD (Pseudomonas fluorescens).